Reading from the N-terminus, the 704-residue chain is Eukaryotic translation initiation factor 2-alpha kinase 1 (704 aa).

The 444-residue stretch at 224 to 667 (FEELELLGKG…LTSNLFHDLV (444 aa)) folds into the Protein kinase domain. ATP is bound by residues 230–238 (LGKGGYGSV) and Lys253. Catalysis depends on Asp491, which acts as the Proton acceptor.

It belongs to the protein kinase superfamily. Ser/Thr protein kinase family. GCN2 subfamily. Post-translationally, autophosphorylated.

It carries out the reaction L-seryl-[protein] + ATP = O-phospho-L-seryl-[protein] + ADP + H(+). The enzyme catalyses L-threonyl-[protein] + ATP = O-phospho-L-threonyl-[protein] + ADP + H(+). Its function is as follows. Mediates down-regulation of protein synthesis in response to stress conditions by the phosphorylation of the alpha subunit of eIF-2 (tif211) on 'Ser-52'. Protein synthesis is inhibited at the level of initiation. Activity is inhibited in the presence of heme. This Schizosaccharomyces pombe (strain 972 / ATCC 24843) (Fission yeast) protein is Eukaryotic translation initiation factor 2-alpha kinase 1 (hri1).